The sequence spans 417 residues: MFSFEKNSLKNTDKEIFDAIELEVKRQHEHVELIASENYASPAVMEAQGSQLTNKYAEGYHGKRYYGGCEFVDIAEKLAIERAQKLFGVDYANVQPHSGSQANAAVYNAVLKPGDTVLGMDLGAGGHLTHGSKVNFSGKIYNSIQYGLSESGDIDYKQVAELAKEHKPKMIIAGFSAFSGIIDWKKFREIADSVDAVLMADIAHVAGLVAAGLYPNPFPYVDVATTTTHKTLRGPRGGLILCNDNPDLAKKFQSAIFPGIQGGPLMHVIAAKAVAFKEALEPSFIDYQKQVLINAKAMEKVLKERNINIISGGTNNHLLLLDITNTGFSGKEAEAALGRANITVNKNSIPNDPRSPFVTSGLRIGSPAITTRGFKEAECEQIANWLADVVYNCGNEKVENETATKVSELCDRFPVYK.

(6S)-5,6,7,8-tetrahydrofolate contacts are provided by residues Leu122 and 126 to 128 (GHL). Position 230 is an N6-(pyridoxal phosphate)lysine (Lys230). 355–357 (SPF) is a (6S)-5,6,7,8-tetrahydrofolate binding site.

Belongs to the SHMT family. As to quaternary structure, homodimer. It depends on pyridoxal 5'-phosphate as a cofactor.

It localises to the cytoplasm. It catalyses the reaction (6R)-5,10-methylene-5,6,7,8-tetrahydrofolate + glycine + H2O = (6S)-5,6,7,8-tetrahydrofolate + L-serine. It participates in one-carbon metabolism; tetrahydrofolate interconversion. Its pathway is amino-acid biosynthesis; glycine biosynthesis; glycine from L-serine: step 1/1. In terms of biological role, catalyzes the reversible interconversion of serine and glycine with tetrahydrofolate (THF) serving as the one-carbon carrier. This reaction serves as the major source of one-carbon groups required for the biosynthesis of purines, thymidylate, methionine, and other important biomolecules. Also exhibits THF-independent aldolase activity toward beta-hydroxyamino acids, producing glycine and aldehydes, via a retro-aldol mechanism. The chain is Serine hydroxymethyltransferase from Francisella philomiragia subsp. philomiragia (strain ATCC 25017 / CCUG 19701 / FSC 153 / O#319-036).